The following is a 210-amino-acid chain: Large ribosomal subunit protein uL3 (210 aa).

The disordered stretch occupies residues 125-151; that stretch reads RHGQSRGPMSHGSRYHRRPGSMGPVAP.

Belongs to the universal ribosomal protein uL3 family. Part of the 50S ribosomal subunit. Forms a cluster with proteins L14 and L19.

Functionally, one of the primary rRNA binding proteins, it binds directly near the 3'-end of the 23S rRNA, where it nucleates assembly of the 50S subunit. The polypeptide is Large ribosomal subunit protein uL3 (Bacillus mycoides (strain KBAB4) (Bacillus weihenstephanensis)).